Consider the following 518-residue polypeptide: MGDEDVDGKCKNMSACSSTTSYSTKLFLFMVPLVVISGFVFVNIGPKDSTSLLTSLSTTTSHLPPPFLSTAPAPAPSPLLPEILPSLPASSLSTKVESIQGDYNRTIQLNMINVTATSNNVSSTASLEPKKRRVLSNLEKIEFKLQKARASIKAASMDDPVDDPDYVPLGPMYWNAKVFHRSYLEMEKQFKIYVYKEGEPPLFHDGPCKSIYSMEGSFIYEIETDTRFRTNNPDKAHVFYLPFSVVKMVRYVYERNSRDFSPIRNTVKDYINLVGDKYPYWNRSIGADHFILSCHDWGPEASFSHPHLGHNSIRALCNANTSERFKPRKDVSIPEINLRTGSLTGLVGGPSPSSRPILAFFAGGVHGPVRPVLLQHWENKDNDIRVHKYLPRGTSYSDMMRNSKFCICPSGYEVASPRIVEALYSGCVPVLINSGYVPPFSDVLNWRSFSVIVSVEDIPNLKTILTSISPRQYLRMYRRVLKVRRHFEVNSPAKRFDVFHMILHSIWVRRLNVKIREV.

The Cytoplasmic segment spans residues 1-25 (MGDEDVDGKCKNMSACSSTTSYSTK). Residues 26–46 (LFLFMVPLVVISGFVFVNIGP) form a helical; Signal-anchor for type II membrane protein membrane-spanning segment. Over 47–518 (KDSTSLLTSL…RRLNVKIREV (472 aa)) the chain is Lumenal. Asn104, Asn113, Asn120, Asn282, and Asn320 each carry an N-linked (GlcNAc...) asparagine glycan.

The protein belongs to the glycosyltransferase 47 family.

It localises to the golgi apparatus membrane. Functionally, may be involved in cell wall biosynthesis. This chain is Probable glycosyltransferase At5g03795, found in Arabidopsis thaliana (Mouse-ear cress).